The primary structure comprises 630 residues: Putative adenylate cyclase regulatory protein (630 aa).

The RING-type zinc finger occupies 10-46; that stretch reads CAVCREPWAEGALELFPCRHVFCTVCVVERWRCPSCQ. LRR repeat units lie at residues 184-206, 207-230, 231-251, 255-277, 278-301, 302-324, 325-347, 348-370, 371-393, 394-416, 417-439, 440-462, 463-485, 486-508, 509-531, 532-554, 555-577, and 578-599; these read FLVH…CRLK, TLEA…CALP, QLTS…RCIH, KLKV…GGMR, SLEK…CKFS, NLRE…KNLI, NLKV…ERLV, NLDK…ANLS, NLKE…QDLN, NLEV…KNLS, KMRE…ETLK, GLEE…WSLH, HLRV…EGIT, GLEE…WNLR, NVCV…QCLT, GLEE…GNLR, NLKC…DRLV, and NLEK…MELM.

May interact with adenylate cyclase to regulate its activity. Functionally, may be involved in the postranscriptional regulation of genes in VSG expression sites. The sequence is that of Putative adenylate cyclase regulatory protein (ESAG8C) from Trypanosoma equiperdum.